A 695-amino-acid polypeptide reads, in one-letter code: Probable Rho-GTPase-activating protein 7 (695 aa).

The span at 1 to 11 (MLSAPSSSTTP) shows a compositional bias: low complexity. Residues 1 to 26 (MLSAPSSSTTPASPPTSPPNTTSSDD) form a disordered region. The F-BAR domain occupies 33 to 307 (PKVEAILNSE…ALDNINANTD (275 aa)). A disordered region spans residues 320–499 (EDNKNPTDAS…SVSPQPSSPT (180 aa)). Composition is skewed to polar residues over residues 336-348 (PPSS…SAGK) and 366-382 (PLQN…NPSV). Composition is skewed to low complexity over residues 383–432 (ASPA…RTSS), 458–467 (PIQTTTIQTS), and 488–499 (PTSVSPQPSSPT). Residues serine 496 and serine 497 each carry the phosphoserine modification. The region spanning 506 to 692 (ARLDAIILRE…ILIDYCFTIF (187 aa)) is the Rho-GAP domain.

In Schizosaccharomyces pombe (strain 972 / ATCC 24843) (Fission yeast), this protein is Probable Rho-GTPase-activating protein 7 (rga7).